Consider the following 488-residue polypeptide: Katanin p60 ATPase-containing subunit A-like 1 (488 aa).

The disordered stretch occupies residues 84-184; sequence FPNPVPEEGP…EQKKFDGTGY (101 aa). Residues 144 to 167 show a composition bias toward basic and acidic residues; sequence KPDRPNTRDGRGNKAKEEKSKRNA. 246-253 provides a ligand contact to ATP; it reads GPPGTGKT.

This sequence belongs to the AAA ATPase family. Katanin p60 subunit A1 subfamily. A-like 1 sub-subfamily.

It localises to the cytoplasm. It is found in the cytoskeleton. The protein localises to the spindle pole. Its subcellular location is the spindle. It carries out the reaction n ATP + n H2O + a microtubule = n ADP + n phosphate + (n+1) alpha/beta tubulin heterodimers.. Regulates microtubule dynamics in Sertoli cells, a process that is essential for spermiogenesis and male fertility. Severs microtubules in an ATP-dependent manner, promoting rapid reorganization of cellular microtubule arrays. This Danio rerio (Zebrafish) protein is Katanin p60 ATPase-containing subunit A-like 1 (katnal1).